The sequence spans 443 residues: EGF-containing fibulin-like extracellular matrix protein 2 (443 aa).

The signal sequence occupies residues M1 to G23. In terms of domain architecture, EGF-like 1; atypical spans Y36–L81. 18 disulfide bridges follow: C58–C121, C65–C80, C71–C109, C127–C140, C134–C149, C151–C162, C168–C177, C173–C186, C188–C201, C207–C217, C213–C226, C228–C241, C247–C258, C254–C267, C269–C281, C287–C300, C294–C309, and C315–C327. In terms of domain architecture, EGF-like 2; calcium-binding spans D123–V163. The EGF-like 3; calcium-binding domain occupies D164–V202. An N-linked (GlcNAc...) asparagine glycan is attached at N198. The EGF-like 4; calcium-binding domain maps to D203–S242. Residues D243–Q282 enclose the EGF-like 5; calcium-binding domain. In terms of domain architecture, EGF-like 6; calcium-binding spans D283–L328. N-linked (GlcNAc...) asparagine glycosylation occurs at N394.

It belongs to the fibulin family. In terms of assembly, homodimer; disulfide-linked. Multimer; allows heparin binding. Monomer. Interacts with FBN1 (via N-terminal domain); this interaction inhibits EFEMP2 binding to LOX and ELN. Interacts with LOX (via propeptide); this interaction is strong and facilitates formation of ternary complexes with ELN during elastic fiber assembly; this interaction limits interaction of EFEMP2 with FBLN5. Interacts with PITX2. Interacts with ELN with moderate affinity; this interaction regulates ELN self-assembly maturation stage. Interacts with FBLN5 with moderate affinity. Interacts with LOXL1 (via propeptide), LTBP1 and TGFB1 stronger than with LOXL2 and LTBP3. Interacts with PCOLCE. Interacts with collagen type IV trimer (COL4A1-COL4A1-COL4A2), NID2 and moderately with COL15A1-derived endostatin. Interacts with EMILIN1; this interaction promotes the incorporation of EFEMP2 into the extracellular matrix. Interacts with LTBP4; the LTBP4 long form (LTBP4L) has a stronger binding affinity than the LTBP4 short form and the LTBP4 long form promotes fibrillar deposition of EFEMP2. N-glycosylated; contains mostly complex-type glycans. Not O-glycosylated. In terms of processing, cleaved by ELANE; produces a 50-55 kDa fragment. Cleaved by MMP2 and MMP9; produces several fragments.

The protein resides in the secreted. Its subcellular location is the extracellular space. It is found in the extracellular matrix. The protein localises to the basement membrane. Plays a crucial role in elastic fiber formation in tissue, and in the formation of ultrastructural connections between elastic laminae and smooth muscle cells in the aorta, therefore participates in terminal differentiation and maturation of smooth muscle cell (SMC) and in the mechanical properties and wall integrity maintenance of the aorta. In addition, is involved in the control of collagen fibril assembly in tissue throught proteolytic activation of LOX leading to cross- linking of collagen and elastin. Also promotes ELN coacervation and participates in the deposition of ELN coacervates on to microfibrils but also regulates ELN cross- linking through LOX interaction. Moreover adheres to the cells through heparin binding in a calcium-dependent manner and regulates vascularlar smooth muscle cells proliferation through angiotensin signaling. The protein is EGF-containing fibulin-like extracellular matrix protein 2 of Homo sapiens (Human).